A 423-amino-acid polypeptide reads, in one-letter code: Diaminobutyrate--2-oxoglutarate transaminase (423 aa).

Lysine 271 bears the N6-(pyridoxal phosphate)lysine mark.

This sequence belongs to the class-III pyridoxal-phosphate-dependent aminotransferase family. Pyridoxal 5'-phosphate is required as a cofactor.

It catalyses the reaction L-2,4-diaminobutanoate + 2-oxoglutarate = L-aspartate 4-semialdehyde + L-glutamate. It functions in the pathway amine and polyamine biosynthesis; ectoine biosynthesis; L-ectoine from L-aspartate 4-semialdehyde: step 1/3. In terms of biological role, catalyzes reversively the conversion of L-aspartate beta-semialdehyde (ASA) to L-2,4-diaminobutyrate (DABA) by transamination with L-glutamate. This Streptomyces coelicolor (strain ATCC BAA-471 / A3(2) / M145) protein is Diaminobutyrate--2-oxoglutarate transaminase (ectB).